We begin with the raw amino-acid sequence, 333 residues long: Fructose-1,6-bisphosphatase class 1 (333 aa).

Residues Glu-92, Asp-114, Leu-116, and Asp-117 each contribute to the Mg(2+) site. Residues 117–120 (DGSS) and Asn-209 each bind substrate. Glu-279 lines the Mg(2+) pocket.

Belongs to the FBPase class 1 family. Homotetramer. It depends on Mg(2+) as a cofactor.

It is found in the cytoplasm. It carries out the reaction beta-D-fructose 1,6-bisphosphate + H2O = beta-D-fructose 6-phosphate + phosphate. The protein operates within carbohydrate biosynthesis; gluconeogenesis. The polypeptide is Fructose-1,6-bisphosphatase class 1 (Alkalilimnicola ehrlichii (strain ATCC BAA-1101 / DSM 17681 / MLHE-1)).